Consider the following 108-residue polypeptide: TYRO protein tyrosine kinase-binding protein (108 aa).

Residues 1–25 (MEGLRPSDRLLSLLLTVGGLSLVLA) form the signal peptide. Residues 26 to 36 (QSECNCSSVSP) are Extracellular-facing. A helical transmembrane segment spans residues 37–57 (GVLAGIVLGDLMLTLLIALAV). Position 46 (Asp-46) interacts with Ca(2+). Residues 58–108 (YYLGRLVPRGRGATEVTRKQHIPETESPYQELQGQRTDVYSDLNTQRPYYK) are Cytoplasmic-facing. Positions 71–108 (TEVTRKQHIPETESPYQELQGQRTDVYSDLNTQRPYYK) are disordered. The ITAM domain maps to 75 to 103 (RKQHIPETESPYQELQGQRTDVYSDLNTQ). Residues 84–108 (SPYQELQGQRTDVYSDLNTQRPYYK) show a composition bias toward polar residues. Phosphotyrosine occurs at positions 86 and 97.

The protein belongs to the TYROBP family. As to quaternary structure, homodimer; disulfide-linked. Homotrimer; disulfide-linked. Homotetramer; disulfide-linked. Homotrimers and homotetramers form when low levels of partner receptors are available and is competitive with assembly with interacting receptors. They may represent alternative oligomerization states or may be intermediates in the receptor assembly process. Binding of a metal cation aids in homooligomerization through coordination of the metal ion by the subunits of the oligomer. Interacts with TREM1. Interacts with TREM2. Interacts with CLECSF5. Interacts with CD300LB and CD300C2. Interacts with CD300E. Interacts (via ITAM domain) with SYK (via SH2 domains); activates SYK mediating neutrophils and macrophages integrin-mediated activation. Interacts with KLRC2. Interacts with CD300H. Interacts with KLRD1. Interacts with SIGLEC1. Post-translationally, following ligand binding by associated receptors, tyrosine phosphorylated in the ITAM domain which leads to activation of additional tyrosine kinases and subsequent cell activation.

The protein resides in the cell membrane. Adapter protein which non-covalently associates with activating receptors found on the surface of a variety of immune cells to mediate signaling and cell activation following ligand binding by the receptors. TYROBP is tyrosine-phosphorylated in the ITAM domain following ligand binding by the associated receptors which leads to activation of additional tyrosine kinases and subsequent cell activation. Also has an inhibitory role in some cells. Non-covalently associates with activating receptors of the CD300 family to mediate cell activation. Also mediates cell activation through association with activating receptors of the CD200R family. Required for neutrophil activation mediated by integrin. Required for the activation of myeloid cells mediated by the CLEC5A/MDL1 receptor. Associates with natural killer (NK) cell receptors such as the KLRD1/KLRC2 heterodimer to mediate NK cell activation. Associates with TREM1 to mediate activation of neutrophils and monocytes. Associates with TREM2 on monocyte-derived dendritic cells to mediate up-regulation of chemokine receptor CCR7 and dendritic cell maturation and survival. Association with TREM2 mediates cytokine-induced formation of multinucleated giant cells which are formed by the fusion of macrophages. Stabilizes the TREM2 C-terminal fragment (TREM2-CTF) produced by TREM2 ectodomain shedding which suppresses the release of pro-inflammatory cytokines. In microglia, required with TREM2 for phagocytosis of apoptotic neurons. Required with ITGAM/CD11B in microglia to control production of microglial superoxide ions which promote the neuronal apoptosis that occurs during brain development. Promotes pro-inflammatory responses in microglia following nerve injury which accelerates degeneration of injured neurons. Positively regulates the expression of the IRAK3/IRAK-M kinase and IL10 production by liver dendritic cells and inhibits their T cell allosimulatory ability. Negatively regulates B cell proliferation. Required for CSF1-mediated osteoclast cytoskeletal organization. Positively regulates multinucleation during osteoclast development. The sequence is that of TYRO protein tyrosine kinase-binding protein from Bos taurus (Bovine).